The primary structure comprises 109 residues: Putative polyketide cyclase (109 aa).

To polyketide cyclases.

Involved in developmentally regulated synthesis of a compound biosynthetically related to polyketide antibiotics which is essential for spore color in Streptomyces halstedii. The polypeptide is Putative polyketide cyclase (sch4) (Streptomyces halstedii).